Here is a 2172-residue protein sequence, read N- to C-terminus: Non-reducing polyketide synthase dpfgA (2172 aa).

The interval 74–181 (EWIKCGNSSL…LALCVGALVD (108 aa)) is N-terminal acylcarrier protein transacylase domain (SAT). In terms of domain architecture, Ketosynthase family 3 (KS3) spans 389 to 783 (DDSIAIIGVS…GTNAAMLVCQ (395 aa)). Residues Cys529, His665, and His706 each act as for beta-ketoacyl synthase activity in the active site. Positions 895 to 1197 (VFAGQTGRQA…SFHSILLQGQ (303 aa)) are malonyl-CoA:ACP transacylase (MAT) domain. Ser981 (for acyl/malonyl transferase activity) is an active-site residue. Residues 1270–1403 (PELVSLAGPT…GTINWQGQGC (134 aa)) form an N-terminal hotdog fold region. Positions 1270–1581 (PELVSLAGPT…LKRIPIRSLQ (312 aa)) constitute a PKS/mFAS DH domain. The segment at 1277 to 1575 (GPTDGETVEF…EIIGASLKRI (299 aa)) is product template (PT) domain. The segment at 1428–1581 (SASTVQGLFV…LKRIPIRSLQ (154 aa)) is C-terminal hotdog fold. 2 disordered regions span residues 1608-1631 (DSDS…HADF) and 1650-1672 (YPMD…VLSD). The segment covering 1650-1668 (YPMDSSSFSSAQPPSSASS) has biased composition (low complexity). Residues 1671 to 1747 (SDHDQESTAL…DLYRMVLNHD (77 aa)) enclose the Carrier domain. Ser1707 carries the O-(pantetheine 4'-phosphoryl)serine modification. The segment at 1751–1773 (DRGSTVLSDKAPKSKSDSSLHGQ) is disordered. The segment at 1975 to 2155 (EFLHRVLSRL…DAGFIHVDWT (181 aa)) is methyltransferase (CMeT) domain.

The protein operates within secondary metabolite biosynthesis; terpenoid biosynthesis. In terms of biological role, non-reducing polyketide synthase; part of the gene cluster that mediates the biosynthesis of diterpenoid pyrones. The first step of the pathway is the synthesis of the alpha-pyrone moiety by the polyketide synthase dpfgA via condensation of one acetyl-CoA starter unit with 3 malonyl-CoA units and 2 methylations. The alpha-pyrone is then combined with geranylgeranyl pyrophosphate (GGPP) formed by the GGPP synthase dpfgD through the action of the prenyltransferase dpfgC to yield a linear alpha-pyrone diterpenoid. Subsequent steps in the diterpenoid pyrone biosynthetic pathway involve the decalin core formation, which is initiated by the epoxidation of the C10-C11 olefin by the FAD-dependent oxidoreductase dpfgE, and is followed by a cyclization cascade catalyzed by the terpene cyclase dpfgB. The short chain dehydrogenase/reductase dpfgG then oxidizes the 8S hydroxy group to a ketone and the short chain dehydrogenase/reductase dpfgH reduces the ketone to the 8R hydroxy group to yield higginsianin B. Higginsianin B is further methylated by the methyltransferase dpfgI to produce the intermediate named FDDP B. The cytochrome P450 monooxygenase dfgpJ then catalyzes a three-step oxidation at C-27 to generate a carboxylic acid as well as C-26 hydroxylation. Finally, methyltransferase dpfgK methylates the carboxylic acid generated by dpfgJ, yielding the final diterpenoid pyrones from the pathway which were named FDDP D and FDDP E. The protein is Non-reducing polyketide synthase dpfgA of Gibberella zeae (strain ATCC MYA-4620 / CBS 123657 / FGSC 9075 / NRRL 31084 / PH-1) (Wheat head blight fungus).